Reading from the N-terminus, the 488-residue chain is Glutamyl-tRNA(Gln) amidotransferase subunit A (488 aa).

Active-site charge relay system residues include Lys-80 and Ser-155. Catalysis depends on Ser-179, which acts as the Acyl-ester intermediate.

The protein belongs to the amidase family. GatA subfamily. Heterotrimer of A, B and C subunits.

It carries out the reaction L-glutamyl-tRNA(Gln) + L-glutamine + ATP + H2O = L-glutaminyl-tRNA(Gln) + L-glutamate + ADP + phosphate + H(+). Allows the formation of correctly charged Gln-tRNA(Gln) through the transamidation of misacylated Glu-tRNA(Gln) in organisms which lack glutaminyl-tRNA synthetase. The reaction takes place in the presence of glutamine and ATP through an activated gamma-phospho-Glu-tRNA(Gln). This is Glutamyl-tRNA(Gln) amidotransferase subunit A from Chloroflexus aggregans (strain MD-66 / DSM 9485).